Here is a 123-residue protein sequence, read N- to C-terminus: Small ribosomal subunit protein uS12 (123 aa).

The residue at position 89 (aspartate 89) is a 3-methylthioaspartic acid. A disordered region spans residues serine 104–lysine 123. The span at aspartate 109 to lysine 123 shows a compositional bias: basic residues.

The protein belongs to the universal ribosomal protein uS12 family. In terms of assembly, part of the 30S ribosomal subunit. Contacts proteins S8 and S17. May interact with IF1 in the 30S initiation complex.

Functionally, with S4 and S5 plays an important role in translational accuracy. Its function is as follows. Interacts with and stabilizes bases of the 16S rRNA that are involved in tRNA selection in the A site and with the mRNA backbone. Located at the interface of the 30S and 50S subunits, it traverses the body of the 30S subunit contacting proteins on the other side and probably holding the rRNA structure together. The combined cluster of proteins S8, S12 and S17 appears to hold together the shoulder and platform of the 30S subunit. In Pelobacter propionicus (strain DSM 2379 / NBRC 103807 / OttBd1), this protein is Small ribosomal subunit protein uS12.